We begin with the raw amino-acid sequence, 360 residues long: mRNA cap guanine-N(7) methyltransferase (360 aa).

Positions 1-62 are disordered; sequence MSSSNSRVHE…NRHENNGNAQ (62 aa). The segment covering 7 to 19 has biased composition (basic and acidic residues); sequence RVHEEQPPTENRR. The mRNA cap 0 methyltransferase domain maps to 83–358; that stretch reads SPIIQLKRFN…FYLAFAFEKR (276 aa). 92-93 serves as a coordination point for mRNA; that stretch reads NN. Lysine 96, glycine 118, aspartate 140, aspartate 168, glutamine 191, and tyrosine 196 together coordinate S-adenosyl-L-methionine.

Belongs to the class I-like SAM-binding methyltransferase superfamily. mRNA cap 0 methyltransferase family. In terms of assembly, interacts with cdk9.

It localises to the nucleus. The catalysed reaction is a 5'-end (5'-triphosphoguanosine)-ribonucleoside in mRNA + S-adenosyl-L-methionine = a 5'-end (N(7)-methyl 5'-triphosphoguanosine)-ribonucleoside in mRNA + S-adenosyl-L-homocysteine. Responsible for methylating the 5'-cap structure of mRNAs. The chain is mRNA cap guanine-N(7) methyltransferase (pcm1) from Schizosaccharomyces pombe (strain 972 / ATCC 24843) (Fission yeast).